The sequence spans 65 residues: Sec-independent protein translocase protein TatA (65 aa).

A helical membrane pass occupies residues 9 to 29 (ILIIVLLVVVVFGVGKLPQVG). Residues 40-65 (RKASTGEDAKEEVETKEETKPAEKSE) are disordered. Over residues 43–65 (STGEDAKEEVETKEETKPAEKSE) the composition is skewed to basic and acidic residues.

It belongs to the TatA/E family. As to quaternary structure, forms a complex with TatC.

It is found in the cell membrane. In terms of biological role, part of the twin-arginine translocation (Tat) system that transports large folded proteins containing a characteristic twin-arginine motif in their signal peptide across membranes. TatA could form the protein-conducting channel of the Tat system. The sequence is that of Sec-independent protein translocase protein TatA from Dehalococcoides mccartyi (strain ATCC BAA-2100 / JCM 16839 / KCTC 5957 / BAV1).